A 422-amino-acid polypeptide reads, in one-letter code: Solanesyl diphosphate synthase 3, chloroplastic/mitochondrial (422 aa).

The transit peptide at 1-32 (MLFTRSVARISSKFLRNRSFYGSSQSLASHRF) directs the protein to the chloroplast and mitochondrion. Positions 125, 128, and 174 each coordinate isopentenyl diphosphate. Mg(2+)-binding residues include Asp181 and Asp185. Arg190 serves as a coordination point for an all-trans-polyprenyl diphosphate. Arg191 provides a ligand contact to isopentenyl diphosphate. An all-trans-polyprenyl diphosphate is bound by residues Lys267, Thr268, Gln305, and Lys322.

This sequence belongs to the FPP/GGPP synthase family. In terms of assembly, homodimer. The cofactor is Mg(2+). Ubiquitous. Highest expression in seeds and shoot apical meristem.

It is found in the plastid. The protein localises to the chloroplast. Its subcellular location is the mitochondrion. It carries out the reaction 5 isopentenyl diphosphate + (2E,6E,10E)-geranylgeranyl diphosphate = all-trans-nonaprenyl diphosphate + 5 diphosphate. Its function is as follows. May be involved in the supply of solanesyl diphosphate for ubiquinone-9 (UQ-9) biosynthesis in mitochondria. Synthesizes C25 to C45 medium / long-chain products depending on the type of substrate available. Can use geranyl diphosphate, farnesyl diphosphate or geranylgeranyl diphosphate as substrates, but not dimethylallyl diphosphate. The polypeptide is Solanesyl diphosphate synthase 3, chloroplastic/mitochondrial (Arabidopsis thaliana (Mouse-ear cress)).